Consider the following 593-residue polypeptide: Probable metalloprotease ARX1 (593 aa).

It belongs to the peptidase M24 family. As to quaternary structure, component of the nucleoplasmic and cytoplasmic pre-60S ribosomal particles. Interacts directly with REI1.

Its subcellular location is the cytoplasm. It localises to the nucleus. Its function is as follows. Probable metalloprotease involved in proper assembly of pre-ribosomal particles during the biogenesis of the 60S ribosomal subunit. Accompanies the pre-60S particles to the cytoplasm. This is Probable metalloprotease ARX1 (ARX1) from Saccharomyces cerevisiae (strain ATCC 204508 / S288c) (Baker's yeast).